Reading from the N-terminus, the 87-residue chain is uncharacterized protein (87 aa).

The interval 43-87 (NQGYGQNFGDASGFMGTRSHVDDRDQIDSPASFESEAVNSSIKRK) is disordered.

This is an uncharacterized protein from Bacillus subtilis (strain 168).